We begin with the raw amino-acid sequence, 310 residues long: Protoheme IX farnesyltransferase 2 (310 aa).

9 consecutive transmembrane segments (helical) span residues 21–41 (IWYLLVFTAFGAAVAASGIYG), 46–66 (IATWALMLFSVAAGSASANVL), 99–119 (FGLFLAGASMVMAACIALTTT), 125–145 (WAAAFIAFGLFNNVLVYSYML), 153–173 (IVLGGLCGGMPPMIGWVAVTT), 180–200 (GLVMGGLVFIWTPMHIWALTL), 226–246 (VIAVSTVAMALFSLAPLLITL), 256–276 (VYLATAAASGALIIALSAWVV), and 284–304 (AWVLFKFSSPYLAVLFIALMV).

The protein belongs to the UbiA prenyltransferase family. Protoheme IX farnesyltransferase subfamily.

It localises to the cell membrane. The enzyme catalyses heme b + (2E,6E)-farnesyl diphosphate + H2O = Fe(II)-heme o + diphosphate. It participates in porphyrin-containing compound metabolism; heme O biosynthesis; heme O from protoheme: step 1/1. Functionally, converts heme B (protoheme IX) to heme O by substitution of the vinyl group on carbon 2 of heme B porphyrin ring with a hydroxyethyl farnesyl side group. The chain is Protoheme IX farnesyltransferase 2 from Cenarchaeum symbiosum (strain A).